The following is a 35-amino-acid chain: Dolichyl-diphosphooligosaccharide--protein glycosyltransferase subunit 4B (35 aa).

The Lumenal segment spans residues 1–8 (MFDDQDLG). The chain crosses the membrane as a helical span at residues 9 to 29 (FFANFLGIFIFIMVIAYHFVV). Topologically, residues 30 to 35 (AEPKFE) are cytoplasmic.

It belongs to the OST4 family. In terms of assembly, component of the oligosaccharyltransferase (OST) complex.

It localises to the endoplasmic reticulum membrane. In terms of biological role, subunit of the oligosaccharyl transferase (OST) complex that catalyzes the initial transfer of a defined glycan (Glc(3)Man(9)GlcNAc(2) in eukaryotes) from the lipid carrier dolichol-pyrophosphate to an asparagine residue within an Asn-X-Ser/Thr consensus motif in nascent polypeptide chains, the first step in protein N-glycosylation. N-glycosylation occurs cotranslationally and the complex associates with the Sec61 complex at the channel-forming translocon complex that mediates protein translocation across the endoplasmic reticulum (ER). All subunits are required for a maximal enzyme activity. This is Dolichyl-diphosphooligosaccharide--protein glycosyltransferase subunit 4B (OST4B) from Arabidopsis thaliana (Mouse-ear cress).